The sequence spans 135 residues: VapC ribonuclease aq_1901 (135 aa).

Positions 3–130 constitute a PINc domain; sequence LLDTTVLLDF…FKKLGFKTVN (128 aa). Position 5 (aspartate 5) interacts with Mg(2+).

It belongs to the PINc/VapC protein family. Requires Mg(2+) as cofactor.

Functionally, toxic component of a type II toxin-antitoxin (TA) system. An RNase. The chain is VapC ribonuclease aq_1901 from Aquifex aeolicus (strain VF5).